Consider the following 348-residue polypeptide: Bifunctional nitrilase/nitrile hydratase NIT4B (348 aa).

The region spanning 29 to 300 (VRATVVQAST…EALISADLDL (272 aa)) is the CN hydrolase domain. Glu69 functions as the Proton acceptor in the catalytic mechanism. The active-site Proton donor is Lys156. The Nucleophile role is filled by Cys190.

The protein belongs to the carbon-nitrogen hydrolase superfamily. Nitrilase family. In terms of tissue distribution, expressed in roots, stems, cotyledons, leaves and flowers.

It carries out the reaction a nitrile + 2 H2O = a carboxylate + NH4(+). The catalysed reaction is 3-cyano-L-alanine + 2 H2O = L-aspartate + NH4(+). In terms of biological role, highly specific for beta-cyano-L-alanine (Ala(CN)). Low activity with 3-phenylpropionitrile (PPN). Not associated with auxin production but may be involved in cyanide detoxification. The protein is Bifunctional nitrilase/nitrile hydratase NIT4B (NIT4B) of Nicotiana tabacum (Common tobacco).